Consider the following 365-residue polypeptide: Class I histocompatibility antigen, Gogo-A*0101 alpha chain (365 aa).

The first 24 residues, 1–24 (MAVMAPRTLVLLLSGALALTQTWA), serve as a signal peptide directing secretion. The alpha-1 stretch occupies residues 25–114 (GSHSMRYFST…LRGYYNQSED (90 aa)). Topologically, residues 25 to 308 (GSHSMRYFST…EPSSQPTIPI (284 aa)) are extracellular. N-linked (GlcNAc...) asparagine glycosylation is present at Asn110. The alpha-2 stretch occupies residues 115 to 206 (GSHTIQRMYG…ENGKETLQRT (92 aa)). 2 cysteine pairs are disulfide-bonded: Cys125-Cys188 and Cys227-Cys283. An alpha-3 region spans residues 207–298 (DAPKTHMTHH…GLPEPLTLRW (92 aa)). Residues 209-297 (PKTHMTHHAV…EGLPEPLTLR (89 aa)) form the Ig-like C1-type domain. The interval 299 to 308 (EPSSQPTIPI) is connecting peptide. A helical transmembrane segment spans residues 309–332 (VGIIAGLVLFGAVIAGAVVAAVRW). Over 333–365 (RRKSSDRKGGSYSQAASSDSAQGSDVSLTACKV) the chain is Cytoplasmic. Residues 338-365 (DRKGGSYSQAASSDSAQGSDVSLTACKV) form a disordered region. A compositionally biased stretch (low complexity) spans 342–359 (GSYSQAASSDSAQGSDVS). Ser343 bears the Phosphoserine mark. Tyr344 carries the post-translational modification Phosphotyrosine. Residues Ser345, Ser349, Ser350, Ser352, Ser356, and Ser359 each carry the phosphoserine modification.

Belongs to the MHC class I family. As to quaternary structure, heterodimer of an alpha chain and a beta chain (beta-2-microglobulin).

The protein localises to the membrane. In terms of biological role, involved in the presentation of foreign antigens to the immune system. The protein is Class I histocompatibility antigen, Gogo-A*0101 alpha chain of Gorilla gorilla gorilla (Western lowland gorilla).